A 655-amino-acid polypeptide reads, in one-letter code: Chaperone protein dnaK1 (655 aa).

Thr197 bears the Phosphothreonine; by autocatalysis mark.

It belongs to the heat shock protein 70 family.

Its function is as follows. Acts as a chaperone. This Synechococcus elongatus (strain ATCC 33912 / PCC 7942 / FACHB-805) (Anacystis nidulans R2) protein is Chaperone protein dnaK1 (dnaK1).